Consider the following 179-residue polypeptide: Acireductone dioxygenase (179 aa).

Positions 99, 101, 105, and 144 each coordinate Fe(2+). Histidine 99, histidine 101, glutamate 105, and histidine 144 together coordinate Ni(2+).

Belongs to the acireductone dioxygenase (ARD) family. In terms of assembly, monomer. The cofactor is Fe(2+). Ni(2+) serves as cofactor.

The catalysed reaction is 1,2-dihydroxy-5-(methylsulfanyl)pent-1-en-3-one + O2 = 3-(methylsulfanyl)propanoate + CO + formate + 2 H(+). It catalyses the reaction 1,2-dihydroxy-5-(methylsulfanyl)pent-1-en-3-one + O2 = 4-methylsulfanyl-2-oxobutanoate + formate + 2 H(+). It functions in the pathway amino-acid biosynthesis; L-methionine biosynthesis via salvage pathway; L-methionine from S-methyl-5-thio-alpha-D-ribose 1-phosphate: step 5/6. In terms of biological role, catalyzes 2 different reactions between oxygen and the acireductone 1,2-dihydroxy-3-keto-5-methylthiopentene (DHK-MTPene) depending upon the metal bound in the active site. Fe-containing acireductone dioxygenase (Fe-ARD) produces formate and 2-keto-4-methylthiobutyrate (KMTB), the alpha-ketoacid precursor of methionine in the methionine recycle pathway. Ni-containing acireductone dioxygenase (Ni-ARD) produces methylthiopropionate, carbon monoxide and formate, and does not lie on the methionine recycle pathway. The chain is Acireductone dioxygenase from Exiguobacterium sibiricum (strain DSM 17290 / CCUG 55495 / CIP 109462 / JCM 13490 / 255-15).